The following is a 339-amino-acid chain: Beta-ketoacyl-[acyl-carrier-protein] synthase III (339 aa).

Catalysis depends on residues Cys119 and His262. An ACP-binding region spans residues 263–267 (QANQR). The active site involves Asn292.

Belongs to the thiolase-like superfamily. FabH family. In terms of assembly, homodimer.

The protein resides in the cytoplasm. It carries out the reaction malonyl-[ACP] + acetyl-CoA + H(+) = 3-oxobutanoyl-[ACP] + CO2 + CoA. The protein operates within lipid metabolism; fatty acid biosynthesis. In terms of biological role, catalyzes the condensation reaction of fatty acid synthesis by the addition to an acyl acceptor of two carbons from malonyl-ACP. Catalyzes the first condensation reaction which initiates fatty acid synthesis and may therefore play a role in governing the total rate of fatty acid production. Possesses both acetoacetyl-ACP synthase and acetyl transacylase activities. Its substrate specificity determines the biosynthesis of branched-chain and/or straight-chain of fatty acids. The sequence is that of Beta-ketoacyl-[acyl-carrier-protein] synthase III from Prochlorococcus marinus (strain MIT 9313).